Reading from the N-terminus, the 281-residue chain is Pantothenate synthetase (281 aa).

29–36 (MGYLHEGH) contacts ATP. Histidine 36 (proton donor) is an active-site residue. Glutamine 60 is a (R)-pantoate binding site. Glutamine 60 is a beta-alanine binding site. 146–149 (GQKD) contacts ATP. Glutamine 152 serves as a coordination point for (R)-pantoate. Residues valine 175 and 183–186 (MSSR) each bind ATP.

Belongs to the pantothenate synthetase family. Homodimer.

The protein resides in the cytoplasm. The catalysed reaction is (R)-pantoate + beta-alanine + ATP = (R)-pantothenate + AMP + diphosphate + H(+). The protein operates within cofactor biosynthesis; (R)-pantothenate biosynthesis; (R)-pantothenate from (R)-pantoate and beta-alanine: step 1/1. Functionally, catalyzes the condensation of pantoate with beta-alanine in an ATP-dependent reaction via a pantoyl-adenylate intermediate. This Pseudothermotoga lettingae (strain ATCC BAA-301 / DSM 14385 / NBRC 107922 / TMO) (Thermotoga lettingae) protein is Pantothenate synthetase.